A 269-amino-acid polypeptide reads, in one-letter code: 4-hydroxy-tetrahydrodipicolinate reductase (269 aa).

NAD(+)-binding positions include 8 to 13 (GVAGRM), 98 to 100 (GTT), and 122 to 125 (APNM). The active-site Proton donor/acceptor is the His-156. His-157 is a binding site for (S)-2,3,4,5-tetrahydrodipicolinate. Lys-160 serves as the catalytic Proton donor. 166–167 (GT) lines the (S)-2,3,4,5-tetrahydrodipicolinate pocket.

This sequence belongs to the DapB family.

The protein localises to the cytoplasm. The catalysed reaction is (S)-2,3,4,5-tetrahydrodipicolinate + NAD(+) + H2O = (2S,4S)-4-hydroxy-2,3,4,5-tetrahydrodipicolinate + NADH + H(+). It carries out the reaction (S)-2,3,4,5-tetrahydrodipicolinate + NADP(+) + H2O = (2S,4S)-4-hydroxy-2,3,4,5-tetrahydrodipicolinate + NADPH + H(+). It functions in the pathway amino-acid biosynthesis; L-lysine biosynthesis via DAP pathway; (S)-tetrahydrodipicolinate from L-aspartate: step 4/4. Its function is as follows. Catalyzes the conversion of 4-hydroxy-tetrahydrodipicolinate (HTPA) to tetrahydrodipicolinate. This is 4-hydroxy-tetrahydrodipicolinate reductase from Chromohalobacter salexigens (strain ATCC BAA-138 / DSM 3043 / CIP 106854 / NCIMB 13768 / 1H11).